The following is a 665-amino-acid chain: UvrABC system protein B (665 aa).

The Helicase ATP-binding domain occupies 25 to 176 (NSIEKGNRFQ…NQRQLLRDLV (152 aa)). 38 to 45 (GATGTGKT) contributes to the ATP binding site. The short motif at 91 to 114 (YYDYYQPEAYIPVSDTYIEKSASI) is the Beta-hairpin element. Residues 429–595 (QVDDLLGEIK…PIVTRSSNAI (167 aa)) enclose the Helicase C-terminal domain. The UVR domain maps to 626-661 (PELIGQLEEQMKEAAKKLEFEEAAKYRDRIQHLRDK).

It belongs to the UvrB family. In terms of assembly, forms a heterotetramer with UvrA during the search for lesions. Interacts with UvrC in an incision complex.

It localises to the cytoplasm. In terms of biological role, the UvrABC repair system catalyzes the recognition and processing of DNA lesions. A damage recognition complex composed of 2 UvrA and 2 UvrB subunits scans DNA for abnormalities. Upon binding of the UvrA(2)B(2) complex to a putative damaged site, the DNA wraps around one UvrB monomer. DNA wrap is dependent on ATP binding by UvrB and probably causes local melting of the DNA helix, facilitating insertion of UvrB beta-hairpin between the DNA strands. Then UvrB probes one DNA strand for the presence of a lesion. If a lesion is found the UvrA subunits dissociate and the UvrB-DNA preincision complex is formed. This complex is subsequently bound by UvrC and the second UvrB is released. If no lesion is found, the DNA wraps around the other UvrB subunit that will check the other stand for damage. The sequence is that of UvrABC system protein B from Gloeothece citriformis (strain PCC 7424) (Cyanothece sp. (strain PCC 7424)).